A 120-amino-acid chain; its full sequence is Small ribosomal subunit protein bS16 (120 aa).

Residues Gly80–Ala120 are disordered. Basic residues predominate over residues Leu81–Pro90. 2 stretches are compositionally biased toward basic and acidic residues: residues His91–Glu101 and Ala109–Ala120.

Belongs to the bacterial ribosomal protein bS16 family.

This Bartonella bacilliformis (strain ATCC 35685 / KC583 / Herrer 020/F12,63) protein is Small ribosomal subunit protein bS16.